The primary structure comprises 365 residues: tRNA 2-selenouridine synthase (365 aa).

Residues 15-138 (FIAGQPLIDL…MRQYLIGVIE (124 aa)) form the Rhodanese domain. Catalysis depends on cysteine 98, which acts as the S-selanylcysteine intermediate.

The protein belongs to the SelU family. As to quaternary structure, monomer.

The enzyme catalyses 5-methylaminomethyl-2-thiouridine(34) in tRNA + selenophosphate + (2E)-geranyl diphosphate + H2O + H(+) = 5-methylaminomethyl-2-selenouridine(34) in tRNA + (2E)-thiogeraniol + phosphate + diphosphate. It catalyses the reaction 5-methylaminomethyl-2-thiouridine(34) in tRNA + (2E)-geranyl diphosphate = 5-methylaminomethyl-S-(2E)-geranyl-thiouridine(34) in tRNA + diphosphate. The catalysed reaction is 5-methylaminomethyl-S-(2E)-geranyl-thiouridine(34) in tRNA + selenophosphate + H(+) = 5-methylaminomethyl-2-(Se-phospho)selenouridine(34) in tRNA + (2E)-thiogeraniol. It carries out the reaction 5-methylaminomethyl-2-(Se-phospho)selenouridine(34) in tRNA + H2O = 5-methylaminomethyl-2-selenouridine(34) in tRNA + phosphate. In terms of biological role, involved in the post-transcriptional modification of the uridine at the wobble position (U34) of tRNA(Lys), tRNA(Glu) and tRNA(Gln). Catalyzes the conversion of 2-thiouridine (S2U-RNA) to 2-selenouridine (Se2U-RNA). Acts in a two-step process involving geranylation of 2-thiouridine (S2U) to S-geranyl-2-thiouridine (geS2U) and subsequent selenation of the latter derivative to 2-selenouridine (Se2U) in the tRNA chain. The sequence is that of tRNA 2-selenouridine synthase from Shewanella sp. (strain ANA-3).